The primary structure comprises 637 residues: Extracellular metalloproteinase MEP (637 aa).

The N-terminal stretch at 1-21 (MRSVDSLLLLGLTGLASQANA) is a signal peptide. A propeptide spanning residues 22-246 (HPAKRQPNDS…VVGVVDYVAD (225 aa)) is cleaved from the precursor. The N-linked (GlcNAc...) asparagine glycan is linked to asparagine 288. Histidine 431 contacts Zn(2+). Glutamate 432 is a catalytic residue. Residue histidine 435 coordinates Zn(2+).

Belongs to the peptidase M36 family. Zn(2+) is required as a cofactor.

Its subcellular location is the secreted. Secreted metalloproteinase that probably acts as a virulence factor. Cleaves Z.mays Endochitinase A (CHIA) between residues 'Gly-29' and 'Cys-30'. In Fusarium vanettenii (strain ATCC MYA-4622 / CBS 123669 / FGSC 9596 / NRRL 45880 / 77-13-4) (Fusarium solani subsp. pisi), this protein is Extracellular metalloproteinase MEP (MEP).